Here is a 544-residue protein sequence, read N- to C-terminus: CTP synthase (544 aa).

Residues 1–266 are amidoligase domain; sequence MTRFVFITGG…DREVLRHFNL (266 aa). Serine 13 serves as a coordination point for CTP. Serine 13 lines the UTP pocket. 14 to 19 is a binding site for ATP; sequence SLGKGI. Tyrosine 54 is a binding site for L-glutamine. Aspartate 71 contributes to the ATP binding site. The Mg(2+) site is built by aspartate 71 and glutamate 140. CTP is bound by residues 147 to 149, 187 to 192, and lysine 223; these read DIE and KTKPTQ. UTP contacts are provided by residues 187–192 and lysine 223; that span reads KTKPTQ. Residues 292–543 enclose the Glutamine amidotransferase type-1 domain; the sequence is KIAIVGKYIT…VAAAVRQARL (252 aa). An L-glutamine-binding site is contributed by glycine 354. Cysteine 381 functions as the Nucleophile; for glutamine hydrolysis in the catalytic mechanism. L-glutamine is bound by residues 382-385, glutamate 405, and arginine 471; that span reads FGMQ. Active-site residues include histidine 516 and glutamate 518.

It belongs to the CTP synthase family. As to quaternary structure, homotetramer.

The catalysed reaction is UTP + L-glutamine + ATP + H2O = CTP + L-glutamate + ADP + phosphate + 2 H(+). It catalyses the reaction L-glutamine + H2O = L-glutamate + NH4(+). The enzyme catalyses UTP + NH4(+) + ATP = CTP + ADP + phosphate + 2 H(+). Its pathway is pyrimidine metabolism; CTP biosynthesis via de novo pathway; CTP from UDP: step 2/2. With respect to regulation, allosterically activated by GTP, when glutamine is the substrate; GTP has no effect on the reaction when ammonia is the substrate. The allosteric effector GTP functions by stabilizing the protein conformation that binds the tetrahedral intermediate(s) formed during glutamine hydrolysis. Inhibited by the product CTP, via allosteric rather than competitive inhibition. Functionally, catalyzes the ATP-dependent amination of UTP to CTP with either L-glutamine or ammonia as the source of nitrogen. Regulates intracellular CTP levels through interactions with the four ribonucleotide triphosphates. The polypeptide is CTP synthase (Granulibacter bethesdensis (strain ATCC BAA-1260 / CGDNIH1)).